We begin with the raw amino-acid sequence, 291 residues long: N-acetylmannosamine kinase (291 aa).

Residues 5-12 (AIDIGGTK) and 132-139 (GVGGGVVC) each bind ATP. Zn(2+) contacts are provided by His-156, Cys-166, Cys-168, and Cys-173.

This sequence belongs to the ROK (NagC/XylR) family. NanK subfamily. Homodimer.

It carries out the reaction an N-acyl-D-mannosamine + ATP = an N-acyl-D-mannosamine 6-phosphate + ADP + H(+). The protein operates within amino-sugar metabolism; N-acetylneuraminate degradation; D-fructose 6-phosphate from N-acetylneuraminate: step 2/5. Functionally, catalyzes the phosphorylation of N-acetylmannosamine (ManNAc) to ManNAc-6-P. The protein is N-acetylmannosamine kinase of Salmonella dublin (strain CT_02021853).